Here is a 247-residue protein sequence, read N- to C-terminus: ATP synthase subunit a, chloroplastic (247 aa).

5 helical membrane-spanning segments follow: residues 38 to 58 (QVLI…TIAV), 95 to 115 (VPFI…GALL), 134 to 154 (INTT…AGLT), 199 to 219 (LVVV…VMLL), and 220 to 240 (GLFT…AYIG).

It belongs to the ATPase A chain family. As to quaternary structure, F-type ATPases have 2 components, CF(1) - the catalytic core - and CF(0) - the membrane proton channel. CF(1) has five subunits: alpha(3), beta(3), gamma(1), delta(1), epsilon(1). CF(0) has four main subunits: a, b, b' and c.

The protein localises to the plastid. It localises to the chloroplast thylakoid membrane. Key component of the proton channel; it plays a direct role in the translocation of protons across the membrane. The chain is ATP synthase subunit a, chloroplastic from Nicotiana sylvestris (Wood tobacco).